The primary structure comprises 228 residues: Aquaporin Z 2 (228 aa).

Helical transmembrane passes span 9–29 and 34–54; these read FFGT…AAAF and IGFT…AYAV. An NPA 1 motif is present at residues 63–65; sequence NPA. The next 3 helical transmembrane spans lie at 82–102, 129–149, and 158–178; these read VPYV…LYVI, LVSA…VILG, and GFAP…SIPV. Positions 184–186 match the NPA 2 motif; sequence NPA. Residues 204-224 traverse the membrane as a helical segment; it reads WLFWLAPIVGGAAGAVIWKLF.

It belongs to the MIP/aquaporin (TC 1.A.8) family. As to quaternary structure, homotetramer.

It localises to the cell inner membrane. The enzyme catalyses H2O(in) = H2O(out). Functionally, channel that permits osmotically driven movement of water in both directions. It is involved in the osmoregulation and in the maintenance of cell turgor during volume expansion in rapidly growing cells. It mediates rapid entry or exit of water in response to abrupt changes in osmolarity. This is Aquaporin Z 2 from Agrobacterium fabrum (strain C58 / ATCC 33970) (Agrobacterium tumefaciens (strain C58)).